Consider the following 972-residue polypeptide: Aminopeptidase Ey (972 aa).

The Cytoplasmic segment spans residues 2–10 (AAGFFISKS). Residues 11 to 31 (VGIVGIVLALGAVATIIALSV) traverse the membrane as a helical; Signal-anchor for type II membrane protein segment. The Extracellular portion of the chain corresponds to 32–972 (VYAQEKNKSS…AWFRAETASS (941 aa)). The interval 33–72 (YAQEKNKSSGGSGGSDTTSTTTASTTTTSTTTASTTAAPN) is cytosolic Ser/Thr-rich junction. Residues 37–77 (KNKSSGGSGGSDTTSTTTASTTTTSTTTASTTAAPNNPWNR) form a disordered region. N-linked (GlcNAc...) asparagine glycosylation is present at N38. Low complexity predominate over residues 47–70 (SDTTSTTTASTTTTSTTTASTTAA). The metalloprotease stretch occupies residues 73 to 967 (NPWNRWRLPT…KEVVHAWFRA (895 aa)). Residues N110, N132, N147, N206, N269, and N296 are each glycosylated (N-linked (GlcNAc...) asparagine). 355–359 (GAMEN) serves as a coordination point for substrate. Position 391 (H391) interacts with Zn(2+). E392 (proton acceptor) is an active-site residue. Zn(2+)-binding residues include H395 and E414. N-linked (GlcNAc...) asparagine glycans are attached at residues N513, N574, N584, N628, N684, and N742. C764 and C771 are oxidised to a cystine. Residue N785 is glycosylated (N-linked (GlcNAc...) asparagine). The cysteines at positions 801 and 837 are disulfide-linked.

It belongs to the peptidase M1 family. In terms of assembly, homodimer. Zn(2+) serves as cofactor. Detected in the plasma and granule fractions of egg yolk (at protein level).

It is found in the cell membrane. It catalyses the reaction Differs from other aminopeptidases in broad specificity for amino acids in the P1 position and the ability to hydrolyze peptides of four or five residues that contain Pro in the P1' position.. Functionally, broad specificity aminopeptidase. Degrades a variety of peptides possessing various N-terminal amino acids including hydrophobic, basic and acidic amino acids. Preferentially hydrolyzes small peptides consisting of 4 or 5 amino acids. Hydrolyzes the N-terminal Xaa-Pro bonds in the chicken brain peptide Leu-Pro-Leu-Arg-PheNH2, the substance P fragment Arg-Pro-Lys-Pro and the bradykinin fragment Arg-Pro-Pro-Gly-Phe. Hydrolyzes the N-formylated peptides fMet-Leu-Phe, fMet-Ala-Gly-Ser-Glu and fMet-Nle-Leu-Phe-Nle-Tyr-Lys, but does not hydrolyze peptides with acetylation or pyroglutamic acid at N-terminus. Does not hydrolyze large peptides such as complete substance P, bradykinin or schistoFLRFamide. The chain is Aminopeptidase Ey (ANPEP) from Gallus gallus (Chicken).